The primary structure comprises 249 residues: Thioesterase TesA (249 aa).

Catalysis depends on residues Ser-92, Asp-196, and His-224.

This sequence belongs to the thioesterase family.

It catalyses the reaction a fatty acyl-CoA + H2O = a fatty acid + CoA + H(+). In terms of biological role, involved in the synthesis of both phthiocerol dimycocerosates (PDIMs) and phenolic glycolipids (PGLs), which are structurally related lipids non-covalently bound to the outer cell wall layer of M.tuberculosis and are important virulence factors. The chain is Thioesterase TesA from Mycobacterium marinum (strain ATCC BAA-535 / M).